Consider the following 100-residue polypeptide: Large ribosomal subunit protein bL27 (100 aa).

A propeptide spanning residues 1-9 (MIIMNLQIF) is cleaved from the precursor. Residues 13–32 (KGMGSSKNGRDSESKRLGTK) form a disordered region.

This sequence belongs to the bacterial ribosomal protein bL27 family. Post-translationally, the N-terminus is cleaved by ribosomal processing cysteine protease Prp.

This Clostridium kluyveri (strain ATCC 8527 / DSM 555 / NBRC 12016 / NCIMB 10680 / K1) protein is Large ribosomal subunit protein bL27.